The primary structure comprises 2947 residues: 3'-5' exoribonuclease HELZ2 (2947 aa).

The C3H1-type 1 zinc-finger motif lies at 85–114 (PMRYQVCHYYRPGLGCRRHWNRCTFARSPE). The segment at 167–187 (CFTCCPPCLCPVDPRGHCPKH) adopts a C2H2-type zinc-finger fold. The C3H1-type 2 zinc-finger motif lies at 221–245 (YCMYVGRGVPCRHGASRCEYAHSAV). The C2H2-type; atypical zinc-finger motif lies at 289-311 (CHACLVTCNSQEAFENHCSSLEH). The UvrD-like helicase ATP-binding domain occupies 769 to 1317 (VGLIAGRRPE…ELLDESQQVT (549 aa)). An ATP-binding site is contributed by 790–797 (GPFGTGKT). An interaction with THRAP3 region spans residues 809 to 1290 (QQPHTKVLIC…GGMSEEDSES (482 aa)). A DEAA box motif is present at residues 913–916 (DEAA). Residues 1260-1292 (EDTASGNSASRDAAAEVSTLEGGMSEEDSESDF) form a disordered region. Short sequence motifs (LXXLL motif) lie at residues 1306-1310 (LKELL), 1348-1352 (LWKFL), 1403-1407 (LVQIL), and 2240-2244 (LEGLP). The residue at position 2381 (arginine 2381) is an Omega-N-methylarginine. Residues 2413–2947 (PEPCRGNWPR…RVQRKSALSS (535 aa)) form an interaction with THRAP3 region. Residues 2449–2726 (LNQSQDRAVR…IMLDTQYRMH (278 aa)) form the UvrD-like helicase ATP-binding 2 domain. ATP is bound at residue 2470–2477 (GPPGTGKT). Positions 2525–2529 (LGGLL) match the LXXLL motif 5 motif.

Belongs to the DNA2/NAM7 helicase family. As to quaternary structure, interacts with PPARA (via DNA-binding domain) and PPARG; the interaction stimulates the transcriptional activity of PPARA and PPARG. Interacts with THRAP3; the interaction is direct and HELZ2 and THRAP3 synergistically enhance the transcriptional activity of PPARG. It is probably part of the peroxisome proliferator activated receptor alpha interacting complex (PRIC).

The protein localises to the cytoplasm. It catalyses the reaction Exonucleolytic cleavage in the 3'- to 5'-direction to yield nucleoside 5'-phosphates.. The catalysed reaction is ATP + H2O = ADP + phosphate + H(+). Can degrade highly structured RNAs through its concerted ATP-dependent RNA helicase and 3' to 5' exoribonuclease activities. Shows a strong preference for pyrimidine over purine residues for its nuclease activity. Acts as a transcriptional coactivator for a number of nuclear receptors including PPARA, PPARG, THRA, THRB and RXRA. The chain is 3'-5' exoribonuclease HELZ2 (Helz2) from Mus musculus (Mouse).